Reading from the N-terminus, the 309-residue chain is Protein FdhE (309 aa).

The protein belongs to the FdhE family.

It localises to the cytoplasm. Its function is as follows. Necessary for formate dehydrogenase activity. The polypeptide is Protein FdhE (Salmonella dublin (strain CT_02021853)).